We begin with the raw amino-acid sequence, 332 residues long: NADH-quinone oxidoreductase subunit H (332 aa).

9 helical membrane-spanning segments follow: residues 4–24 (FAFF…IFAS), 44–64 (IGPD…MIKL), 78–98 (FIFA…LAAI), 120–140 (VALL…FLGG), 165–185 (VGAL…LVDI), 194–214 (FSWL…ALFI), 255–275 (IAGA…FWII), 279–299 (IMMI…RAAF), and 312–332 (YLIL…TVLL).

Belongs to the complex I subunit 1 family. In terms of assembly, NDH-1 is composed of 14 different subunits. Subunits NuoA, H, J, K, L, M, N constitute the membrane sector of the complex.

The protein resides in the cell inner membrane. It carries out the reaction a quinone + NADH + 5 H(+)(in) = a quinol + NAD(+) + 4 H(+)(out). In terms of biological role, NDH-1 shuttles electrons from NADH, via FMN and iron-sulfur (Fe-S) centers, to quinones in the respiratory chain. The immediate electron acceptor for the enzyme in this species is believed to be ubiquinone. Couples the redox reaction to proton translocation (for every two electrons transferred, four hydrogen ions are translocated across the cytoplasmic membrane), and thus conserves the redox energy in a proton gradient. This subunit may bind ubiquinone. The sequence is that of NADH-quinone oxidoreductase subunit H from Campylobacter jejuni subsp. jejuni serotype O:23/36 (strain 81-176).